The following is a 275-amino-acid chain: Thiazole synthase (275 aa).

The active-site Schiff-base intermediate with DXP is Lys108. Residues Gly169, 196-197 (AG), and 218-219 (NT) each bind 1-deoxy-D-xylulose 5-phosphate.

It belongs to the ThiG family. In terms of assembly, homotetramer. Forms heterodimers with either ThiH or ThiS.

Its subcellular location is the cytoplasm. The catalysed reaction is [ThiS sulfur-carrier protein]-C-terminal-Gly-aminoethanethioate + 2-iminoacetate + 1-deoxy-D-xylulose 5-phosphate = [ThiS sulfur-carrier protein]-C-terminal Gly-Gly + 2-[(2R,5Z)-2-carboxy-4-methylthiazol-5(2H)-ylidene]ethyl phosphate + 2 H2O + H(+). It participates in cofactor biosynthesis; thiamine diphosphate biosynthesis. Its function is as follows. Catalyzes the rearrangement of 1-deoxy-D-xylulose 5-phosphate (DXP) to produce the thiazole phosphate moiety of thiamine. Sulfur is provided by the thiocarboxylate moiety of the carrier protein ThiS. In vitro, sulfur can be provided by H(2)S. The sequence is that of Thiazole synthase from Ralstonia pickettii (strain 12J).